Consider the following 30-residue polypeptide: Bacteriocin SRCAM 37 (30 aa).

Belongs to the bacteriocin class IIA/YGNGV family.

It is found in the secreted. Functionally, bacteriocin with antibacterial activity against C.jejuni. The sequence is that of Bacteriocin SRCAM 37 from Paenibacillus polymyxa (Bacillus polymyxa).